A 290-amino-acid polypeptide reads, in one-letter code: Glycine--tRNA ligase alpha subunit (290 aa).

Belongs to the class-II aminoacyl-tRNA synthetase family. Tetramer of two alpha and two beta subunits.

It localises to the cytoplasm. It catalyses the reaction tRNA(Gly) + glycine + ATP = glycyl-tRNA(Gly) + AMP + diphosphate. In Prochlorococcus marinus (strain NATL1A), this protein is Glycine--tRNA ligase alpha subunit.